A 390-amino-acid chain; its full sequence is Galactokinase (390 aa).

A substrate-binding site is contributed by 33–36; the sequence is EHTD. ATP-binding positions include Ser-67 and 124 to 130; that span reads GAGLSSS. Mg(2+) contacts are provided by Ser-130 and Glu-162. Asp-174 functions as the Proton acceptor in the catalytic mechanism. Tyr-224 serves as a coordination point for substrate.

It belongs to the GHMP kinase family. GalK subfamily.

It is found in the cytoplasm. It catalyses the reaction alpha-D-galactose + ATP = alpha-D-galactose 1-phosphate + ADP + H(+). It participates in carbohydrate metabolism; galactose metabolism. Functionally, catalyzes the transfer of the gamma-phosphate of ATP to D-galactose to form alpha-D-galactose-1-phosphate (Gal-1-P). The polypeptide is Galactokinase (Bacillus subtilis (strain 168)).